The sequence spans 298 residues: Putative olfactory receptor 10D4 (298 aa).

The Extracellular segment spans residues 1–23 (MRNHTMVTEFILLGIPETEGLET). N3 carries an N-linked (GlcNAc...) asparagine glycan. Residues 24–44 (ALLFLFSSFYLCTLLGNVLIL) form a helical membrane-spanning segment. Residues 45–52 (TAIISSTR) are Cytoplasmic-facing. The chain crosses the membrane as a helical span at residues 53 to 73 (LHTPMYFFLGNLSIFDLGFSS). The Extracellular segment spans residues 74–97 (TTVPKMLFYLSGNSHAISYAGCVS). C95 and C187 are oxidised to a cystine. Residues 98–118 (QLFFYHFLGCTECFLYTVMAC) traverse the membrane as a helical segment. Residues 119–137 (DRFVAICFPLRYTVIMNHR) are Cytoplasmic-facing. Residues 138 to 158 (VCFMLATGTWMIGCVHAMILT) form a helical membrane-spanning segment. The Extracellular portion of the chain corresponds to 159 to 195 (PLTFQLPYCGPNKVGYYFCDIPAVLPLACKDTSLAQR). The chain crosses the membrane as a helical span at residues 196–215 (VGFTNVGLLSLICFFLILVS). Residues 216 to 235 (YTCIGISISKIRSAEGRQRA) lie on the Cytoplasmic side of the membrane. A helical transmembrane segment spans residues 236 to 256 (FSTCSAHLTAILCAYGPVIVI). Over 257-267 (YLQPNPSALLG) the chain is Extracellular. The chain crosses the membrane as a helical span at residues 268-288 (SIIQILNNLVTPMLNPLIYSL). At 289–298 (RNKDVKSDQP) the chain is on the cytoplasmic side.

Belongs to the G-protein coupled receptor 1 family.

The protein localises to the cell membrane. Its function is as follows. Odorant receptor. The polypeptide is Putative olfactory receptor 10D4 (OR10D4P) (Homo sapiens (Human)).